The primary structure comprises 187 residues: Putative type I specificity subunit S.MpnORF289P N-terminus (187 aa).

The protein belongs to the type-I restriction system S methylase family. The methyltransferase is composed of M and S polypeptides.

The N-terminal section of a specificity (S) subunit of a type I methyltransferase (MTase); this subunit dictates DNA sequence specificity. The single R subunit has multiple frameshifts and is probably not expressed. The protein is Putative type I specificity subunit S.MpnORF289P N-terminus of Mycoplasma pneumoniae (strain ATCC 29342 / M129 / Subtype 1) (Mycoplasmoides pneumoniae).